The chain runs to 442 residues: Na(+)/H(+) antiporter NhaA (442 aa).

The next 11 membrane-spanning stretches (helical) occupy residues 32–52, 73–93, 111–131, 139–159, 170–190, 193–213, 234–254, 284–304, 316–336, 352–372, and 383–403; these read IGGGLLLAATVLALGWANSPW, LTLAQWAADGLLAIFFFVAGL, AVPVLAACGGVAVPAVLYALV, AGWAIPTATDIAFALAVLAVI, FLLTLAVVDDLLAIVIIAVVY, HLSILPLLGALVPLALFTLLV, VHASGVHATVAGVLLGFAVPV, VAVPIFAFFSAGVTVDGLSGL, VVLGLVVGKPLGIMAATFLVA, VLGLAVLAGIGFTVSLLIGEL, and HVKIAVLTGSLLAALLAAVVL. A compositionally biased stretch (basic and acidic residues) spans 423–435; that stretch reads HDGIPDVYQDLHR. Residues 423-442 form a disordered region; that stretch reads HDGIPDVYQDLHRSSPRPWG.

It belongs to the NhaA Na(+)/H(+) (TC 2.A.33) antiporter family.

Its subcellular location is the cell membrane. It catalyses the reaction Na(+)(in) + 2 H(+)(out) = Na(+)(out) + 2 H(+)(in). Na(+)/H(+) antiporter that extrudes sodium in exchange for external protons. This chain is Na(+)/H(+) antiporter NhaA, found in Frankia casuarinae (strain DSM 45818 / CECT 9043 / HFP020203 / CcI3).